A 111-amino-acid polypeptide reads, in one-letter code: Universal stress protein B (111 aa).

The next 2 helical transmembrane spans lie at 1-21 (MIST…NMAR) and 90-110 (FLLT…LMIW).

This sequence belongs to the universal stress protein B family.

The protein resides in the cell inner membrane. This Salmonella arizonae (strain ATCC BAA-731 / CDC346-86 / RSK2980) protein is Universal stress protein B.